The chain runs to 131 residues: D-ribose pyranase (131 aa).

Histidine 20 acts as the Proton donor in catalysis. Residues aspartate 28, histidine 98, and 120 to 122 (YAN) each bind substrate.

Belongs to the RbsD / FucU family. RbsD subfamily. Homodecamer.

The protein resides in the cytoplasm. The enzyme catalyses beta-D-ribopyranose = beta-D-ribofuranose. It participates in carbohydrate metabolism; D-ribose degradation; D-ribose 5-phosphate from beta-D-ribopyranose: step 1/2. Functionally, catalyzes the interconversion of beta-pyran and beta-furan forms of D-ribose. This Bacillus cytotoxicus (strain DSM 22905 / CIP 110041 / 391-98 / NVH 391-98) protein is D-ribose pyranase.